The sequence spans 489 residues: uncharacterized protein (489 aa).

Position 26 is a phosphothreonine (Thr-26). The residue at position 27 (Ser-27) is a Phosphoserine. The next 3 membrane-spanning stretches (helical) occupy residues 63–83, 182–202, and 221–241; these read IVYL…IEFA, LVWS…ILCA, and VFKL…IAFL. Disordered stretches follow at residues 260–312, 401–435, and 450–489; these read PKTS…APLE, STLL…VPPS, and PSIN…PVVH. Ser-263 is subject to Phosphoserine. Residues 268–282 are compositionally biased toward polar residues; that stretch reads QRGTSSSQPSENDAN. Residues 450–465 show a composition bias toward polar residues; the sequence is PSINNVGGSTAPSVNN. Over residues 477 to 489 the composition is skewed to low complexity; it reads SRSSTLTERPVVH.

It is found in the endoplasmic reticulum membrane. This is an uncharacterized protein from Schizosaccharomyces pombe (strain 972 / ATCC 24843) (Fission yeast).